We begin with the raw amino-acid sequence, 512 residues long: Rab11 family-interacting protein 2 (512 aa).

Positions 1-120 (MMLSEQAQKW…DKQRRKTEWF (120 aa)) constitute a C2 domain. Positions 15–102 (VQVTVLQAKD…GLDKFLGQVA (88 aa)) are necessary for its cellular translocation to the plasma membrane. Disordered stretches follow at residues 169-239 (DKMK…MSSE) and 262-285 (VPESGSLKSPHRRTLSFDTSKMNQ). Over residues 178–188 (GTFSDTSSAII) the composition is skewed to polar residues. The segment covering 226-236 (HSMSDLSGSHM) has biased composition (low complexity). Ser227 is modified (phosphoserine; by MARK2). Ser277 carries the post-translational modification Phosphoserine. The NPF 1 motif lies at 323-325 (NPF). Positions 361–374 (ERVTGKKDSRRSDK) are enriched in basic and acidic residues. The tract at residues 361 to 392 (ERVTGKKDSRRSDKLNNGGSDSPCDLKSPNAF) is disordered. 2 short sequence motifs (NPF) span residues 406 to 408 (NPF) and 440 to 442 (NPF). One can recognise an FIP-RBD domain in the interval 437–499 (PDSNPFDATA…EETPSILRVP (63 aa)). Residues 465 to 512 (ELLRRKDTHIRELEDYIDNLLVRVMEETPSILRVPYEPSRKAGKFSNS) form a necessary for interaction with AP2A1, RAB11A, subcellular location, endocytosis activity and homooligomerization region.

In terms of assembly, homooligomerizes in a Rab11-independent manner. Forms a heterooligomeric complex with RAB11FIP4. Interacts with AP2A1, MYO5B, RAB25 and REPS1. Interacts with RAB11A and RAB11B (activated GTP-bound form). Interacts with NPC1L1. Interacts (via NPF motifs) with EHD1 and EHD3. Interacts with TICAM2; this interaction directs RAB11FIP2 to the phagosome. Interacts with RAB14 and RAB25 (GTP-bound forms). In terms of processing, phosphorylation at Ser-227 by MARK2 regulates epithelial cell polarity.

It localises to the cell projection. The protein resides in the phagocytic cup. Its subcellular location is the cell membrane. It is found in the recycling endosome membrane. Functionally, a Rab11 effector binding preferentially phosphatidylinositol 3,4,5-trisphosphate (PtdInsP3) and phosphatidic acid (PA) and acting in the regulation of the transport of vesicles from the endosomal recycling compartment (ERC) to the plasma membrane. Involved in insulin granule exocytosis. Also involved in receptor-mediated endocytosis and membrane trafficking of recycling endosomes, probably originating from clathrin-coated vesicles. Required in a complex with MYO5B and RAB11 for the transport of NPC1L1 to the plasma membrane. Also acts as a regulator of cell polarity. Plays an essential role in phagocytosis through a mechanism involving TICAM2, RAC1 and CDC42 Rho GTPases for controlling actin-dynamics. This chain is Rab11 family-interacting protein 2 (RAB11FIP2), found in Homo sapiens (Human).